A 105-amino-acid chain; its full sequence is Nucleoid-associated protein Lm4b_02677 (105 aa).

The segment covering Met1–Lys16 has biased composition (low complexity). Residues Met1–Lys23 form a disordered region.

The protein belongs to the YbaB/EbfC family. As to quaternary structure, homodimer.

It is found in the cytoplasm. Its subcellular location is the nucleoid. Its function is as follows. Binds to DNA and alters its conformation. May be involved in regulation of gene expression, nucleoid organization and DNA protection. The polypeptide is Nucleoid-associated protein Lm4b_02677 (Listeria monocytogenes serotype 4b (strain CLIP80459)).